A 339-amino-acid polypeptide reads, in one-letter code: Lipopolysaccharide glucosyltransferase WaaO (339 aa).

UDP is bound by residues 34–39 (GTDKNF) and 131–132 (DA). Residues D131 and D133 each contribute to the Mg(2+) site. Short sequence motifs (DXD) lie at residues 131-133 (DAD) and 220-222 (DQD). A Mg(2+)-binding site is contributed by H265. Residue 265 to 271 (HYIGPTK) participates in UDP binding.

Belongs to the glycosyltransferase 8 family. Requires Mg(2+) as cofactor.

It catalyses the reaction UDP-glucose + lipopolysaccharide = UDP + alpha-D-glucosyl-lipopolysaccharide.. The catalysed reaction is alpha-D-Gal-(1-&gt;6)-alpha-D-Glc-(1-&gt;3)-[L-alpha-D-Hep-(1-&gt;7)]-4-O-PO3(2-)-L-alpha-D-Hep-(1-&gt;3)-4-O-PO3(2-)-L-alpha-D-Hep-(1-&gt;5)-[alpha-Kdo-(2-&gt;4)]-alpha-Kdo-(2-&gt;6)-lipid A + UDP-alpha-D-glucose = alpha-D-Glc-(1-&gt;3)-[alpha-D-Gal-(1-&gt;6)]-alpha-D-Glc-(1-&gt;3)-[L-alpha-D-Hep-(1-&gt;7)]-4-O-PO3(2-)-L-alpha-D-Hep-(1-&gt;3)-4-O-PO3(2-)-L-alpha-D-Hep-(1-&gt;5)-[alpha-Kdo-(2-&gt;4)]-alpha-Kdo-(2-&gt;6)-lipid A + UDP + H(+). It functions in the pathway bacterial outer membrane biogenesis; LPS core biosynthesis. In terms of biological role, glucosyltransferase involved in the biosynthesis of the core oligosaccharide region of lipopolysaccharide (LPS). Catalyzes the addition of a second glucose (glucose II) to the first outer-core glucose (glucose I). In vitro, can add multiple glucose residues to its lipid acceptor. Activity does not require the branched galactose added by WaaB, but it is higher in the presence of this branched galactose. In the absence of a lipid acceptor, can hydrolyze UDP-glucose, but not UDP-galactose. This Escherichia coli (strain K12) protein is Lipopolysaccharide glucosyltransferase WaaO.